A 590-amino-acid polypeptide reads, in one-letter code: Oligoendopeptidase F homolog (590 aa).

His381 is a Zn(2+) binding site. Glu382 is a catalytic residue. 2 residues coordinate Zn(2+): His385 and His388.

This sequence belongs to the peptidase M3B family. Requires Zn(2+) as cofactor.

In Borreliella burgdorferi (strain ATCC 35210 / DSM 4680 / CIP 102532 / B31) (Borrelia burgdorferi), this protein is Oligoendopeptidase F homolog (pepF).